A 394-amino-acid chain; its full sequence is 1-deoxy-D-xylulose 5-phosphate reductoisomerase (394 aa).

Residues threonine 10, glycine 11, serine 12, isoleucine 13, glycine 38, arginine 39, asparagine 40, and asparagine 123 each contribute to the NADPH site. Lysine 124 provides a ligand contact to 1-deoxy-D-xylulose 5-phosphate. Glutamate 125 contacts NADPH. Aspartate 149 is a Mn(2+) binding site. The 1-deoxy-D-xylulose 5-phosphate site is built by serine 150, glutamate 151, serine 175, and histidine 198. Glutamate 151 is a binding site for Mn(2+). Position 204 (glycine 204) interacts with NADPH. The 1-deoxy-D-xylulose 5-phosphate site is built by serine 211, asparagine 216, lysine 217, and glutamate 220. Glutamate 220 provides a ligand contact to Mn(2+).

This sequence belongs to the DXR family. The cofactor is Mg(2+). Mn(2+) serves as cofactor.

The catalysed reaction is 2-C-methyl-D-erythritol 4-phosphate + NADP(+) = 1-deoxy-D-xylulose 5-phosphate + NADPH + H(+). It functions in the pathway isoprenoid biosynthesis; isopentenyl diphosphate biosynthesis via DXP pathway; isopentenyl diphosphate from 1-deoxy-D-xylulose 5-phosphate: step 1/6. Functionally, catalyzes the NADPH-dependent rearrangement and reduction of 1-deoxy-D-xylulose-5-phosphate (DXP) to 2-C-methyl-D-erythritol 4-phosphate (MEP). The sequence is that of 1-deoxy-D-xylulose 5-phosphate reductoisomerase from Cereibacter sphaeroides (strain ATCC 17025 / ATH 2.4.3) (Rhodobacter sphaeroides).